Consider the following 1024-residue polypeptide: Multidrug resistance protein MdtC (1024 aa).

A run of 12 helical transmembrane segments spans residues 12 to 32, 333 to 353, 360 to 380, 387 to 407, 431 to 451, 463 to 483, 528 to 548, 853 to 873, 875 to 895, 897 to 917, 953 to 973, and 984 to 1004; these read VATT…FSLL, EVER…FLFL, LIPA…MYLC, LSLM…IVVL, VGFT…PLLL, FAVT…TLTP, WVMV…ISIP, LWLI…LYES, VHPL…LLAL, LFDA…IGIV, PILM…ISSG, and ITIV…TPVV.

Belongs to the resistance-nodulation-cell division (RND) (TC 2.A.6) family. MdtC subfamily. Part of a tripartite efflux system composed of MdtA, MdtB and MdtC. MdtC forms a heteromultimer with MdtB.

It is found in the cell inner membrane. The protein is Multidrug resistance protein MdtC of Yersinia enterocolitica serotype O:8 / biotype 1B (strain NCTC 13174 / 8081).